The sequence spans 381 residues: DNA replication and repair protein RecF (381 aa).

30-37 (GENAQGKT) provides a ligand contact to ATP.

It belongs to the RecF family.

It is found in the cytoplasm. Its function is as follows. The RecF protein is involved in DNA metabolism; it is required for DNA replication and normal SOS inducibility. RecF binds preferentially to single-stranded, linear DNA. It also seems to bind ATP. This Lactobacillus delbrueckii subsp. bulgaricus (strain ATCC 11842 / DSM 20081 / BCRC 10696 / JCM 1002 / NBRC 13953 / NCIMB 11778 / NCTC 12712 / WDCM 00102 / Lb 14) protein is DNA replication and repair protein RecF.